We begin with the raw amino-acid sequence, 113 residues long: Endoribonuclease SymE (113 aa).

The SpoVT-AbrB domain maps to 29 to 74 (SRYPDYSRIPAITLKGQWLEAAGFATGTAVDVKVMEGCIVLTAQPP).

It belongs to the SymE family.

The protein localises to the cytoplasm. Involved in the degradation and recycling of damaged RNA. It is itself a target for degradation by the ATP-dependent protease Lon. This chain is Endoribonuclease SymE, found in Escherichia coli O6:K15:H31 (strain 536 / UPEC).